The chain runs to 41 residues: Large ribosomal subunit protein bL36 (41 aa).

The protein belongs to the bacterial ribosomal protein bL36 family.

The sequence is that of Large ribosomal subunit protein bL36 from Mesorhizobium japonicum (strain LMG 29417 / CECT 9101 / MAFF 303099) (Mesorhizobium loti (strain MAFF 303099)).